The sequence spans 315 residues: MADGDSGSERGGGGPGSFQPAPRGGGGPGGEQETQELASKRLDIQNKRFYLDVKQNAKGRFLKIAEVGAGGSKSRLTLSMAVAAEFRDSLGDFIEHYAQLGPSSPEQLAAGAEEGGGPRRALKSEFLVRENRKYYLDLKENQRGRFLRIRQTVNRGGGGFGGGPGPGGLQSGQTIALPAQGLIEFRDALAKLIDDYGGEDDELAGGPGGGAGGPGGGLYGELPEGTSITVDSKRFFFDVGCNKYGVFLRVSEVKPSYRNAITVPFKAWGKFGGAFCRYADEMKEIQERQRDKLYERRGGGSGGGDESEGEEVDED.

The segment at 1-39 (MADGDSGSERGGGGPGSFQPAPRGGGGPGGEQETQELAS) is disordered. Ala-2 is subject to N-acetylalanine. 2 positions are modified to phosphoserine: Ser-6 and Ser-8. An Omega-N-methylarginine modification is found at Arg-23. Residues 28–254 (PGGEQETQEL…GVFLRVSEVK (227 aa)) are DNA-binding. Thr-34 is modified (phosphothreonine). A Phosphoserine modification is found at Ser-104. Arg-155 carries the omega-N-methylarginine modification. The disordered stretch occupies residues 200 to 220 (DDELAGGPGGGAGGPGGGLYG). A compositionally biased stretch (gly residues) spans 205 to 219 (GGPGGGAGGPGGGLY). Lys-270 bears the N6-acetyllysine mark. The segment covering 288-298 (RQRDKLYERRG) has biased composition (basic and acidic residues). The interval 288 to 315 (RQRDKLYERRGGGSGGGDESEGEEVDED) is disordered. At Arg-297 the chain carries Omega-N-methylarginine. 2 positions are modified to phosphoserine: Ser-301 and Ser-307. The span at 305–315 (DESEGEEVDED) shows a compositional bias: acidic residues.

The protein belongs to the PUR DNA-binding protein family. In terms of assembly, homodimer, heterodimer with PURA and heterotrimer with PURA and YBX1/Y-box protein 1. Interacts with MYOCD and SRF. Expressed in muscle cells and in the liver.

It is found in the nucleus. Transcriptional regulator which can act as an activator or a repressor. Represses the transcription of ACTA2 in fibroblasts and smooth muscle cells via its ability to interact with the purine-rich strand of a MCAT- containing element in the 5' flanking region of the gene. Represses the transcription of MYOCD, capable of repressing all isoforms of MYOCD but the magnitude of the repressive effects is most notable for the SMC- specific isoforms. Promotes hepatic glucose production by activating the transcription of ADCY6, leading to cAMP accumulation, increased PKA activity, CREB activation, and increased transcription of PCK1 and G6PC genes. Has capacity to bind repeated elements in single-stranded DNA such as the purine-rich single strand of the PUR element located upstream of the MYC gene. Participates in transcriptional and translational regulation of alpha-MHC expression in cardiac myocytes by binding to the purine-rich negative regulatory (PNR) element. Modulates constitutive liver galectin-3 gene transcription by binding to its promoter. May play a role in the dendritic transport of a subset of mRNAs. The polypeptide is Transcriptional regulator protein Pur-beta (Purb) (Rattus norvegicus (Rat)).